The following is a 491-amino-acid chain: Putative mannan endo-1,4-beta-mannosidase 5 (491 aa).

The first 31 residues, 1 to 31, serve as a signal peptide directing secretion; it reads METSYREEEARRKASLLHCIFFFLLGALAMA. Positions 134 and 248 each coordinate substrate. E249 serves as the catalytic Proton donor. Y330 is a binding site for substrate. The Nucleophile role is filled by E372. The N-linked (GlcNAc...) asparagine glycan is linked to N385. W416 is a substrate binding site. A glycan (N-linked (GlcNAc...) asparagine) is linked at N471.

The protein belongs to the glycosyl hydrolase 5 (cellulase A) family. In terms of tissue distribution, expression not detected.

Its subcellular location is the secreted. The catalysed reaction is Random hydrolysis of (1-&gt;4)-beta-D-mannosidic linkages in mannans, galactomannans and glucomannans.. This is Putative mannan endo-1,4-beta-mannosidase 5 (MAN5) from Oryza sativa subsp. japonica (Rice).